The primary structure comprises 528 residues: (R)-citramalate synthase (528 aa).

Positions 5 to 271 (VYIYDTTLRD…IPQENLKKLT (267 aa)) constitute a Pyruvate carboxyltransferase domain.

It belongs to the alpha-IPM synthase/homocitrate synthase family.

It carries out the reaction pyruvate + acetyl-CoA + H2O = (3R)-citramalate + CoA + H(+). It participates in amino-acid biosynthesis; L-isoleucine biosynthesis; 2-oxobutanoate from pyruvate: step 1/3. Its function is as follows. Catalyzes the condensation of pyruvate and acetyl-coenzyme A to form (R)-citramalate. This chain is (R)-citramalate synthase, found in Aquifex aeolicus (strain VF5).